Here is a 275-residue protein sequence, read N- to C-terminus: Probable dual specificity protein phosphatase DDB_G0271350 (275 aa).

A Tyrosine-protein phosphatase domain is found at 2–143; sequence GISMILDNFL…LCDLELKLTN (142 aa). Catalysis depends on C87, which acts as the Phosphocysteine intermediate.

This sequence belongs to the protein-tyrosine phosphatase family. Non-receptor class dual specificity subfamily.

It carries out the reaction O-phospho-L-tyrosyl-[protein] + H2O = L-tyrosyl-[protein] + phosphate. The catalysed reaction is O-phospho-L-seryl-[protein] + H2O = L-seryl-[protein] + phosphate. It catalyses the reaction O-phospho-L-threonyl-[protein] + H2O = L-threonyl-[protein] + phosphate. Has a dual specificity toward Ser/Thr and Tyr-containing proteins. The protein is Probable dual specificity protein phosphatase DDB_G0271350 of Dictyostelium discoideum (Social amoeba).